The following is a 224-amino-acid chain: Urease accessory protein UreF (224 aa).

The protein belongs to the UreF family. In terms of assembly, ureD, UreF and UreG form a complex that acts as a GTP-hydrolysis-dependent molecular chaperone, activating the urease apoprotein by helping to assemble the nickel containing metallocenter of UreC. The UreE protein probably delivers the nickel.

The protein resides in the cytoplasm. Its function is as follows. Required for maturation of urease via the functional incorporation of the urease nickel metallocenter. The protein is Urease accessory protein UreF of Pseudomonas fluorescens (strain SBW25).